The primary structure comprises 398 residues: KiSS-1 receptor (398 aa).

Over 1 to 46 the chain is Extracellular; the sequence is MHTVATSGPNASWGAPANASGCPGCGANASDGPVPSPRAVDAWLVP. Residues Asn-10, Asn-18, and Asn-28 are each glycosylated (N-linked (GlcNAc...) asparagine). Residues 47–67 traverse the membrane as a helical segment; sequence LFFAALMLLGLVGNSLVIYVI. At 68–78 the chain is on the cytoplasmic side; that stretch reads CRHKPMRTVTN. Residues 79 to 101 form a helical membrane-spanning segment; that stretch reads FYIANLAATDVTFLLCCVPFTAL. At 102–120 the chain is on the extracellular side; the sequence is LYPLPGWVLGDFMCKFVNY. Residues Cys-115 and Cys-191 are joined by a disulfide bond. Residues 121–138 form a helical membrane-spanning segment; the sequence is IQQVSVQATCATLTAMSV. Residues 139-157 are Cytoplasmic-facing; it reads DRWYVTVFPLRALHRRTPR. A helical transmembrane segment spans residues 158 to 178; sequence LALAVSLSIWVGSAAVSAPVL. The Extracellular portion of the chain corresponds to 179–202; it reads ALHRLSPGPRAYCSEAFPSRALER. The helical transmembrane segment at 203 to 223 threads the bilayer; the sequence is AFALYNLLALYLLPLLATCAC. Residues 224 to 263 are Cytoplasmic-facing; sequence YAAMLRHLGRVAVRPAPADSALQGQVLAERAGAVRAKVSR. A helical membrane pass occupies residues 264–284; it reads LVAAVVLLFAACWGPIQLFLV. Residues 285-305 are Extracellular-facing; it reads LQALGPAGSWHPRSYAAYALK. A helical transmembrane segment spans residues 306–328; the sequence is TWAHCMSYSNSALNPLLYAFLGS. The Cytoplasmic segment spans residues 329 to 398; the sequence is HFRQAFRRVC…CVLGEDNAPL (70 aa). The tract at residues 341 to 363 is disordered; it reads APRRPRRPRRPGPSDPAAPHAEL.

This sequence belongs to the G-protein coupled receptor 1 family. As to expression, most highly expressed in the pancreas, placenta and spinal cord, with lower-level of expression in peripheral blood leukocytes, kidney, lung, fetal liver, stomach, small intestine, testes, spleen, thymus, adrenal glands and lymph nodes. In the adult brain, expressed in the superior frontal gyrus, putamen, caudate nucleus, cingulate gyrus, nucleus accumbens, hippocampus, pons and amygdala, as well as the hypothalamus and pituitary. Expression levels are higher in early (7-9 weeks) than term placentas. Expression levels were increased in both early placentas and molar pregnancies and were reduced in choriocarcinoma cells. Expressed at higher levels in first trimester trophoblasts than at term of gestation. Also found in the extravillous trophoblast suggesting endocrine/paracrine activation mechanism.

Its subcellular location is the cell membrane. Functionally, receptor for metastin (kisspeptin-54 or kp-54), a C-terminally amidated peptide of KiSS1. KiSS1 is a metastasis suppressor protein that suppresses metastases in malignant melanomas and in some breast carcinomas without affecting tumorigenicity. The metastasis suppressor properties may be mediated in part by cell cycle arrest and induction of apoptosis in malignant cells. The receptor is essential for normal gonadotropin-released hormone physiology and for puberty. The hypothalamic KiSS1/KISS1R system is a pivotal factor in central regulation of the gonadotropic axis at puberty and in adulthood. The receptor is also probably involved in the regulation and fine-tuning of trophoblast invasion generated by the trophoblast itself. Analysis of the transduction pathways activated by the receptor identifies coupling to phospholipase C and intracellular calcium release through pertussis toxin-insensitive G(q) proteins. In Homo sapiens (Human), this protein is KiSS-1 receptor (KISS1R).